Here is a 671-residue protein sequence, read N- to C-terminus: TOM1-like protein 6 (671 aa).

A2 is subject to N-acetylalanine. The VHS domain occupies 15–144; that stretch reads ATSDLLLGPD…ELRRSGVEFP (130 aa). At S147 the chain carries Phosphoserine. A GAT domain is found at 229–317; sequence EVEGLSLSSI…LLAKHDAIAS (89 aa). Disordered regions lie at residues 320 to 620 and 636 to 671; these read PLPV…VGQK and GSAD…RKMI. The segment covering 334–362 has biased composition (low complexity); sequence ASKPADSSPKSSEAKDSSSIAGSSSPIPA. Positions 372–382 are enriched in acidic residues; it reads DEEYEEEEDEF. A compositionally biased stretch (polar residues) spans 395–405; the sequence is SVTTDPTSLES. Positions 407–417 are enriched in low complexity; it reads NAASNALALAL. Pro residues predominate over residues 444–459; it reads STPPAPSSQPSPPPPA. Residues 483–554 show a composition bias toward low complexity; the sequence is AQQQQPQQPQ…QPSTRPQNPY (72 aa). 2 stretches are compositionally biased toward polar residues: residues 562–598 and 605–616; these read ASTS…NSFP and QATSTASNSGVS. S596 carries the post-translational modification Phosphoserine. Residues 647-663 are compositionally biased toward low complexity; the sequence is NSSNGSQNLSGSQTQQS.

Belongs to the TOM1 family. In terms of tissue distribution, ubiquitously expressed.

The protein resides in the endosome. It localises to the multivesicular body. Its subcellular location is the cytoplasm. It is found in the early endosome membrane. Acts as a gatekeeper for degradative protein sorting to the vacuole. Plays a role in recognition of ubiquitinated PIN2 auxin carrier at the plasma membrane and further to its endocytic sorting. Binds ubiquitin in vitro. Might contribute to the loading of the ESCRT machinery. This chain is TOM1-like protein 6, found in Arabidopsis thaliana (Mouse-ear cress).